The chain runs to 437 residues: Serine--tRNA ligase (437 aa).

An L-serine-binding site is contributed by 244–246 (TAE). 275-277 (RSE) is an ATP binding site. Glutamate 298 is a binding site for L-serine. Position 362–365 (362–365 (EISS)) interacts with ATP. Serine 397 is a binding site for L-serine.

It belongs to the class-II aminoacyl-tRNA synthetase family. Type-1 seryl-tRNA synthetase subfamily. As to quaternary structure, homodimer. The tRNA molecule binds across the dimer.

The protein resides in the cytoplasm. The enzyme catalyses tRNA(Ser) + L-serine + ATP = L-seryl-tRNA(Ser) + AMP + diphosphate + H(+). It carries out the reaction tRNA(Sec) + L-serine + ATP = L-seryl-tRNA(Sec) + AMP + diphosphate + H(+). It participates in aminoacyl-tRNA biosynthesis; selenocysteinyl-tRNA(Sec) biosynthesis; L-seryl-tRNA(Sec) from L-serine and tRNA(Sec): step 1/1. In terms of biological role, catalyzes the attachment of serine to tRNA(Ser). Is also able to aminoacylate tRNA(Sec) with serine, to form the misacylated tRNA L-seryl-tRNA(Sec), which will be further converted into selenocysteinyl-tRNA(Sec). The chain is Serine--tRNA ligase from Nitrosomonas europaea (strain ATCC 19718 / CIP 103999 / KCTC 2705 / NBRC 14298).